Reading from the N-terminus, the 798-residue chain is Suppressor of spindle checkpoint defect 1 (798 aa).

The stretch at 339-359 (ESIQQSQVNVDDMCNRIANME) forms a coiled coil.

The protein belongs to the APC5 family. In terms of assembly, the APC/C complex is probably composed of at least 12 subunits: apc-2, apc-10, apc-11, cdc-26, emb-1, emb-27, emb-30, mat-1, mat-2, mat-3, such-1 and gfi-3. Expressed in head neurons, vulval precursor cells and in mature sperm stored in the spermatheca.

It functions in the pathway protein modification; protein ubiquitination. Its function is as follows. Probable component of the anaphase promoting complex/cyclosome (APC/C), a cell cycle-regulated E3 ubiquitin ligase that controls progression through mitosis and the G1 phase of the cell cycle. The APC/C complex acts by mediating ubiquitination and subsequent degradation of target proteins. Required for the metaphase to anaphase transition in meiosis. Plays a role in the segregation of DNA and centrioles during meiosis in male germ cells. The polypeptide is Suppressor of spindle checkpoint defect 1 (Caenorhabditis elegans).